A 371-amino-acid polypeptide reads, in one-letter code: Aminomethyltransferase (371 aa).

The protein belongs to the GcvT family. In terms of assembly, the glycine cleavage system is composed of four proteins: P, T, L and H.

The enzyme catalyses N(6)-[(R)-S(8)-aminomethyldihydrolipoyl]-L-lysyl-[protein] + (6S)-5,6,7,8-tetrahydrofolate = N(6)-[(R)-dihydrolipoyl]-L-lysyl-[protein] + (6R)-5,10-methylene-5,6,7,8-tetrahydrofolate + NH4(+). Functionally, the glycine cleavage system catalyzes the degradation of glycine. In Leptospira borgpetersenii serovar Hardjo-bovis (strain JB197), this protein is Aminomethyltransferase.